Here is a 334-residue protein sequence, read N- to C-terminus: Anthranilate phosphoribosyltransferase (334 aa).

5-phospho-alpha-D-ribose 1-diphosphate-binding positions include Gly79, 82-83 (GD), Ser87, 89-92 (NIST), 107-115 (KAGNRSISS), and Ser119. Gly79 serves as a coordination point for anthranilate. Ser91 contacts Mg(2+). An anthranilate-binding site is contributed by Asn110. Anthranilate is bound at residue Arg165. Mg(2+) is bound by residues Asp224 and Glu225.

The protein belongs to the anthranilate phosphoribosyltransferase family. In terms of assembly, homodimer. It depends on Mg(2+) as a cofactor.

The enzyme catalyses N-(5-phospho-beta-D-ribosyl)anthranilate + diphosphate = 5-phospho-alpha-D-ribose 1-diphosphate + anthranilate. Its pathway is amino-acid biosynthesis; L-tryptophan biosynthesis; L-tryptophan from chorismate: step 2/5. Functionally, catalyzes the transfer of the phosphoribosyl group of 5-phosphorylribose-1-pyrophosphate (PRPP) to anthranilate to yield N-(5'-phosphoribosyl)-anthranilate (PRA). The sequence is that of Anthranilate phosphoribosyltransferase from Streptococcus thermophilus (strain ATCC BAA-491 / LMD-9).